The primary structure comprises 511 residues: 2-isopropylmalate synthase (511 aa).

The Pyruvate carboxyltransferase domain occupies 6–269 (IIIFDTTLRD…YTDIKCENIF (264 aa)). Residues Asp-15, His-203, His-205, and Asn-239 each contribute to the Mn(2+) site. The tract at residues 394–511 (VIEKLSVISG…SLKVEERKMA (118 aa)) is regulatory domain.

Belongs to the alpha-IPM synthase/homocitrate synthase family. LeuA type 1 subfamily. Homodimer. Mn(2+) is required as a cofactor.

It is found in the cytoplasm. It carries out the reaction 3-methyl-2-oxobutanoate + acetyl-CoA + H2O = (2S)-2-isopropylmalate + CoA + H(+). Its pathway is amino-acid biosynthesis; L-leucine biosynthesis; L-leucine from 3-methyl-2-oxobutanoate: step 1/4. In terms of biological role, catalyzes the condensation of the acetyl group of acetyl-CoA with 3-methyl-2-oxobutanoate (2-ketoisovalerate) to form 3-carboxy-3-hydroxy-4-methylpentanoate (2-isopropylmalate). This is 2-isopropylmalate synthase from Campylobacter jejuni subsp. jejuni serotype O:23/36 (strain 81-176).